The chain runs to 103 residues: Large ribosomal subunit protein bL21 (103 aa).

The protein belongs to the bacterial ribosomal protein bL21 family. In terms of assembly, part of the 50S ribosomal subunit. Contacts protein L20.

This protein binds to 23S rRNA in the presence of protein L20. The polypeptide is Large ribosomal subunit protein bL21 (Aeromonas salmonicida (strain A449)).